We begin with the raw amino-acid sequence, 88 residues long: Sapecin-B (88 aa).

Positions methionine 1 to alanine 24 are cleaved as a signal peptide. Residues lysine 25–arginine 54 constitute a propeptide that is removed on maturation. 3 cysteine pairs are disulfide-bonded: cysteine 57–cysteine 78, cysteine 64–cysteine 84, and cysteine 68–cysteine 86.

The protein belongs to the invertebrate defensin family. Type 1 subfamily. Hemocytes and fat body.

It localises to the secreted. Functionally, sapecins, which are potent bactericidal proteins, are produced in response to injury. Sapecin B is cytotoxic to Gram-positive bacteria. This Sarcophaga peregrina (Flesh fly) protein is Sapecin-B.